A 123-amino-acid polypeptide reads, in one-letter code: Small ribosomal subunit protein uS13 (123 aa).

Positions 97 to 123 (PVRGQKTKTNARTRKGPKKTVGRKKKK) are disordered. Residues 101 to 123 (QKTKTNARTRKGPKKTVGRKKKK) show a composition bias toward basic residues.

It belongs to the universal ribosomal protein uS13 family. Part of the 30S ribosomal subunit. Forms a loose heterodimer with protein S19. Forms two bridges to the 50S subunit in the 70S ribosome.

Functionally, located at the top of the head of the 30S subunit, it contacts several helices of the 16S rRNA. In the 70S ribosome it contacts the 23S rRNA (bridge B1a) and protein L5 of the 50S subunit (bridge B1b), connecting the 2 subunits; these bridges are implicated in subunit movement. Contacts the tRNAs in the A and P-sites. The chain is Small ribosomal subunit protein uS13 from Alkaliphilus oremlandii (strain OhILAs) (Clostridium oremlandii (strain OhILAs)).